The primary structure comprises 332 residues: Methylthioribose-1-phosphate isomerase (332 aa).

Substrate-binding positions include 44-46 (RGA), Arg-87, and Gln-192. Residue Asp-233 is the Proton donor of the active site. 243–244 (NK) contacts substrate.

The protein belongs to the eIF-2B alpha/beta/delta subunits family. MtnA subfamily.

The enzyme catalyses 5-(methylsulfanyl)-alpha-D-ribose 1-phosphate = 5-(methylsulfanyl)-D-ribulose 1-phosphate. The protein operates within amino-acid biosynthesis; L-methionine biosynthesis via salvage pathway; L-methionine from S-methyl-5-thio-alpha-D-ribose 1-phosphate: step 1/6. In terms of biological role, catalyzes the interconversion of methylthioribose-1-phosphate (MTR-1-P) into methylthioribulose-1-phosphate (MTRu-1-P). The chain is Methylthioribose-1-phosphate isomerase from Dehalococcoides mccartyi (strain CBDB1).